The sequence spans 358 residues: Fructose-bisphosphate aldolase 5, cytosolic (358 aa).

Ser-2 is subject to N-acetylserine. Arg-39 is a substrate binding site. Cys-68 is subject to S-glutathionyl cysteine; transient. Cys-173 is subject to S-glutathionyl cysteine; transient; alternate. Position 173 is an S-nitrosocysteine; transient; alternate (Cys-173). Catalysis depends on Glu-183, which acts as the Proton acceptor. Lys-225 (schiff-base intermediate with dihydroxyacetone-P) is an active-site residue. Substrate-binding positions include 266–268 (SGG) and Arg-298. Ser-350 carries the phosphoserine modification.

This sequence belongs to the class I fructose-bisphosphate aldolase family. As to quaternary structure, homotetramer. Interacts with TRX3. In terms of processing, S-glutathionylated at Cys-68 and Cys-173. Post-translationally, S-nitrosylated at Cys-173. In terms of tissue distribution, expressed in rosette leaves and cauline leaves.

Its subcellular location is the cytoplasm. The protein resides in the cytosol. It carries out the reaction beta-D-fructose 1,6-bisphosphate = D-glyceraldehyde 3-phosphate + dihydroxyacetone phosphate. Its pathway is carbohydrate degradation; glycolysis; D-glyceraldehyde 3-phosphate and glycerone phosphate from D-glucose: step 4/4. Fructose-bisphosphate aldolase that plays a key role in glycolysis and gluconeogenesis. In Arabidopsis thaliana (Mouse-ear cress), this protein is Fructose-bisphosphate aldolase 5, cytosolic.